We begin with the raw amino-acid sequence, 540 residues long: Na(+)/H(+) antiporter NhaS2 (540 aa).

A run of 10 helical transmembrane segments spans residues 29-49, 71-91, 117-137, 138-158, 207-227, 256-276, 296-316, 323-343, 358-378, and 389-409; these read ITTLVENLIILLLVATLVALV, GLSVGLNPELILNFFLPILIF, VVISAAITAVLLKIGLGLAWV, TAAGVSVILTITDTVSVIAAF, IFVAFVGGGLVGLGLGYLCVG, LGVSSAIAVVVAGLVIGNLAL, FGVNTLIFLLVGIEVYPSILL, LIAIVAYQIGRVFSIYPLLYL, VLIAGNVKGSLSMALALALPL, and LVFSTVMVSLIGQGLSLPWVV.

The protein belongs to the monovalent cation:proton antiporter 1 (CPA1) transporter (TC 2.A.36) family.

It localises to the cell membrane. Its function is as follows. Required for Na(+) uptake into the cell, especially at low external Na(+) concentrations or low Na(+)/K(+) ratios. May be part of a sodium cycle that permits re-entry of sodium into the cell. This is Na(+)/H(+) antiporter NhaS2 (nhaS2) from Synechocystis sp. (strain ATCC 27184 / PCC 6803 / Kazusa).